Reading from the N-terminus, the 310-residue chain is AMMECR1-like protein (310 aa).

The segment at L26–P92 is disordered. Polar residues-rich tracts occupy residues G28–D66 and S74–G84. At S74 the chain carries Phosphoserine. In terms of domain architecture, AMMECR1 spans N97 to R291.

This is AMMECR1-like protein (Ammecr1l) from Mus musculus (Mouse).